Consider the following 132-residue polypeptide: NADH-quinone oxidoreductase subunit A 2 (132 aa).

The next 3 membrane-spanning stretches (helical) occupy residues 9 to 29, 66 to 86, and 93 to 113; these read AWAFIAYVLGAVALCLVMLGL, LVAMLFVIFGIEMPFLYLWAV, and WAGFVEVALFVSLLLAGLFYL.

The protein belongs to the complex I subunit 3 family. As to quaternary structure, NDH-1 is composed of 13 different subunits. Subunits NuoA, H, J, K, L, M, N constitute the membrane sector of the complex.

The protein resides in the cell inner membrane. It carries out the reaction a quinone + NADH + 5 H(+)(in) = a quinol + NAD(+) + 4 H(+)(out). Functionally, NDH-1 shuttles electrons from NADH, via FMN and iron-sulfur (Fe-S) centers, to quinones in the respiratory chain. The immediate electron acceptor for the enzyme in this species is believed to be ubiquinone. Couples the redox reaction to proton translocation (for every two electrons transferred, four hydrogen ions are translocated across the cytoplasmic membrane), and thus conserves the redox energy in a proton gradient. The protein is NADH-quinone oxidoreductase subunit A 2 of Pseudomonas paraeruginosa (strain DSM 24068 / PA7) (Pseudomonas aeruginosa (strain PA7)).